The chain runs to 570 residues: CRISPR-associated protein Cas8a1/Csx13 (570 aa).

Disordered stretches follow at residues 1–23 (MACM…AGLR) and 551–570 (GGEA…SEQS).

The protein belongs to the CRISPR-associated protein Cas8a1/Csx13 family. Myxan subtype subfamily.

In terms of biological role, CRISPR (clustered regularly interspaced short palindromic repeat) is an adaptive immune system that provides protection against mobile genetic elements (viruses, transposable elements and conjugative plasmids). CRISPR clusters contain spacers, sequences complementary to antecedent mobile elements, and target invading nucleic acids. CRISPR clusters are transcribed and processed into CRISPR RNA (crRNA). Its function is as follows. Functions in an unknown fashion to stimulate transcription of fruA independently of the intracellular A- and E-developmental signals. This is CRISPR-associated protein Cas8a1/Csx13 (devT) from Myxococcus xanthus (strain DK1622).